The primary structure comprises 226 residues: RLA class II histocompatibility antigen, DP alpha-1 chain (226 aa).

Residues 1–189 (EHVSVFVIFA…PIQMPETTET (189 aa)) lie on the Extracellular side of the membrane. N75 and N115 each carry an N-linked (GlcNAc...) asparagine glycan. Positions 84 to 176 (PEVIVFPKEP…LDAPLLTHWE (93 aa)) constitute an Ig-like C1-type domain. The cysteines at positions 104 and 160 are disulfide-linked. Residues 190-210 (VVCALGLVVGLAGVVVGIVLI) form a helical membrane-spanning segment. Residues 211–226 (TKALRSSPDPRARRPL) lie on the Cytoplasmic side of the membrane.

The protein belongs to the MHC class II family.

The protein localises to the membrane. The polypeptide is RLA class II histocompatibility antigen, DP alpha-1 chain (Oryctolagus cuniculus (Rabbit)).